Here is a 673-residue protein sequence, read N- to C-terminus: Translation factor GUF1 homolog, mitochondrial (673 aa).

The region spanning 68 to 260 (ERIRNFSIIA…AVIERIPSPP (193 aa)) is the tr-type G domain. Residues 77-84 (AHVDHGKS), 153-157 (DTPGH), and 207-210 (NKID) each bind GTP.

It belongs to the TRAFAC class translation factor GTPase superfamily. Classic translation factor GTPase family. LepA subfamily.

The protein localises to the mitochondrion inner membrane. It carries out the reaction GTP + H2O = GDP + phosphate + H(+). Its function is as follows. Promotes mitochondrial protein synthesis. May act as a fidelity factor of the translation reaction, by catalyzing a one-codon backward translocation of tRNAs on improperly translocated ribosomes. Binds to mitochondrial ribosomes in a GTP-dependent manner. The polypeptide is Translation factor GUF1 homolog, mitochondrial (Ricinus communis (Castor bean)).